The chain runs to 453 residues: Putative amino acid/polyamine transporter MPH_07630_2 (453 aa).

The next 3 helical transmembrane spans lie at Ile2 to Val21, Val30 to Ala50, and Val81 to Ala101. An N-linked (GlcNAc...) asparagine glycan is attached at Asn110. Transmembrane regions (helical) follow at residues Trp121–Leu141 and Ala151–Asn171. Residue Asn186 is glycosylated (N-linked (GlcNAc...) asparagine). 2 helical membrane passes run Ala193 to Pro213 and Ile231 to Phe251. N-linked (GlcNAc...) asparagine glycosylation is present at Asn274. 4 consecutive transmembrane segments (helical) span residues Gly277–Ala297, Leu330–Ile350, Phe358–Leu378, and Gly403–Phe423. Asn435 is a glycosylation site (N-linked (GlcNAc...) asparagine).

Belongs to the amino acid-polyamine-organocation (APC) superfamily.

It is found in the membrane. The chain is Putative amino acid/polyamine transporter MPH_07630_2 from Macrophomina phaseolina (strain MS6) (Charcoal rot fungus).